Consider the following 325-residue polypeptide: Large ribosomal subunit protein uL1m (325 aa).

The transit peptide at 1-50 (MAAAVRCMGRALIHHQRHSLSKMVYQTSLCSCSVNIRVPNRHFAAATKSA) directs the protein to the mitochondrion.

This sequence belongs to the universal ribosomal protein uL1 family. Component of the mitochondrial large ribosomal subunit (mt-LSU). Mature mammalian 55S mitochondrial ribosomes consist of a small (28S) and a large (39S) subunit. The 28S small subunit contains a 12S ribosomal RNA (12S mt-rRNA) and 30 different proteins. The 39S large subunit contains a 16S rRNA (16S mt-rRNA), a copy of mitochondrial valine transfer RNA (mt-tRNA(Val)), which plays an integral structural role, and 52 different proteins.

Its subcellular location is the mitochondrion. The chain is Large ribosomal subunit protein uL1m (MRPL1) from Homo sapiens (Human).